Consider the following 169-residue polypeptide: Cell cycle link protein (169 aa).

The segment at 9-22 (LPEELREKIVHDHL) is binding to host SKP1 protein. Positions 110-114 (LSCRE) match the LXCXE motif, interaction with host RBR motif.

This sequence belongs to the nanovirus Clink protein family. As to quaternary structure, interacts with host SKP1. Interacts (via LXCXE domain) with host retinoblastoma-related protein 1 (RBR1). Interacts (via LXCXE domain) with retinoblastoma-related proteins (RBR).

In terms of biological role, interacts with and disrupts the function of host retinoblastoma-related proteins RBR, which are key regulators of the cell cycle. Induces transcriptional activation of E2F-regulated S-phase and G2/M-phase-specific genes. Inactivation of the ability of RBR to arrest the cell cycle leads to the stimulation of viral DNA replication. This chain is Cell cycle link protein (DNA-C), found in Faba bean necrotic yellows virus (isolate Egyptian EV1-93) (FBNYV).